Here is a 176-residue protein sequence, read N- to C-terminus: Ribosome maturation factor RimM (176 aa).

In terms of domain architecture, PRC barrel spans 93 to 168; it reads DDEVYIEDIL…TIRITPPPGL (76 aa).

Belongs to the RimM family. Binds ribosomal protein uS19.

It is found in the cytoplasm. In terms of biological role, an accessory protein needed during the final step in the assembly of 30S ribosomal subunit, possibly for assembly of the head region. Essential for efficient processing of 16S rRNA. May be needed both before and after RbfA during the maturation of 16S rRNA. It has affinity for free ribosomal 30S subunits but not for 70S ribosomes. This is Ribosome maturation factor RimM from Oleidesulfovibrio alaskensis (strain ATCC BAA-1058 / DSM 17464 / G20) (Desulfovibrio alaskensis).